The chain runs to 701 residues: Putative pentatricopeptide repeat-containing protein At3g25970 (701 aa).

PPR repeat units follow at residues 34-64 (DIYV…MPKR), 65-99 (DSVS…GSDV), 100-134 (DGYS…GYEC), 135-165 (NVYV…ISEP), 166-200 (NSVS…AAVT), 202-236 (DAGT…GLQH), 237-267 (EITI…LGGS), 269-303 (DLIS…WVET), 304-338 (DIYT…GLEQ), 339-371 (VTSA…LKSK), 372-406 (DLIS…EIKV), 407-441 (DDYA…GFVS), 442-472 (NEFV…ISSK), 474-508 (STVA…NVKL), 509-539 (DHVT…MEPV), and 545-575 (RMEH…MPLN). The type E motif stretch occupies residues 580–655 (VLKTFLGVCR…VPGWSWIEIR (76 aa)). The tract at residues 656–686 (NQVKAFNAEDRSNPLCQDIYMMIKDLTQEMQ) is type E(+) motif.

It belongs to the PPR family. PCMP-E subfamily.

In Arabidopsis thaliana (Mouse-ear cress), this protein is Putative pentatricopeptide repeat-containing protein At3g25970 (PCMP-E46).